Reading from the N-terminus, the 524-residue chain is Fusicoccadiene C-8 hydroxylase (524 aa).

Residues 16–36 (LQLLCIGPLVYACVSFIIKIV) form a helical membrane-spanning segment. N-linked (GlcNAc...) asparagine glycans are attached at residues Asn126 and Asn344. Cys465 contributes to the heme binding site. Asn496 carries N-linked (GlcNAc...) asparagine glycosylation.

The protein belongs to the cytochrome P450 family. It depends on heme as a cofactor.

It is found in the membrane. The protein operates within mycotoxin biosynthesis. Functionally, cytochrome P450 monooxygenase; part of the 2 gene clusters that mediate the biosynthesis of fusicoccins, diterpene glucosides that display phytohormone-like activity and function as potent activators of plasma membrane H(+)-ATPases in plants by modifying 14-3-3 proteins and cause the plant disease constriction canker. The first step in the pathway is performed by the fusicoccadiene synthase PaFS that possesses both prenyl transferase and terpene cyclase activity, converting isopentenyl diphosphate and dimethylallyl diphosphate into geranylgeranyl diphosphate (GGDP) and successively converting GGDP into fusicocca-2,10(14)-diene, a precursor for fusicoccin H. The second step is the oxidation at the C-8 position by the cytochrome P450 monooxygenase PaP450-2 to yield fusicocca-2,10(14)-diene-8-beta-ol. The cytochrome P450 monooxygenase PaP450-1 then catalyzes the hydroxylation at the C-16 position to produce fusicocca-2,10(14)-diene-8-beta,16-diol. The dioxygenase fc-dox then catalyzes the 16-oxydation of fusicocca-2,10(14)-diene-8-beta,16-diol to yield an aldehyde (8-beta-hydroxyfusicocca-1,10(14)-dien-16-al). The short-chain dehydrogenase/reductase fc-sdr catalyzes the reduction of the aldehyde to yield fusicocca-1,10(14)-diene-8-beta,16-diol. The next step is the hydroxylation at C-9 performed by the cytochrome P450 monooxygenase PaP450-3 that leads to fusicoccin H aglycon which is glycosylated to fusicoccin H by the O-glycosyltransferase PaGT. Hydroxylation at C-12 by the cytochrome P450 monooxygenase PaP450-4 leads then to the production of fusicoccin Q and is followed by methylation by the O-methyltransferase PaMT to yield fusicoccin P. Fusicoccin P is further converted to fusicoccin J via prenylation by the O-glucose prenyltransferase PaPT. Cytochrome P450 monooxygenase PaP450-5 then performs hydroxylation at C-19 to yield dideacetyl-fusicoccin A which is acetylated to 3'-O-deacetyl-fusicoccin A by the O-acetyltransferase PaAT-2. Finally, a another acetylation by the O-acetyltransferase PaAT-1 yields fusicoccin A. This Phomopsis amygdali (Fusicoccum amygdali) protein is Fusicoccadiene C-8 hydroxylase.